The following is a 691-amino-acid chain: MSRSTPLKKVRNIGIAAHIDAGKTTTSERILFFTGMSHKIGEVHDGAATMDWMEQEKERGITITSAATTCFWKDHQINLIDTPGHVDFTIEVERSMRVLDGAVAVFCSVGGVQPQSETVWRQANKYGVPRIVFVNKMDRIGANFYNVEDQIRNRLKANPVPLQIPIGAEDNFKGVIDLVTMKALVWEDDTKPTDYVEKEIPAELKEKAEEYRTKMIEAVSETSDELMEKYLGGEELSLEEIKTGIKAGCLSLSIVPMLCGTAFKNKGVQPLLDAVVAYLPAPDEVPNIKGEYEDGTEVSVKSTDDGEFAGLAFKIMTDPFVGQLTFVRVYRGCLESGSYAYNSTKDKKERIGRLLKMHSNKREEIKVLYAGEIGAVVGLKDTLTGDTLASEKDKVILERMDFPDPVISVAVEPKTKADQEKMSIALNKLAQEDPSFRVSTDEESGQTIISGMGELHLEIIVDRMLREFKVEAEVGQPQVAYRETIRKTVEQEYKYAKQSGGRGQYGHVFLRLEPLEPGSGYEFVNDIKGGVIPKEYIPAVDKGVQEALQNGVLAGYPVEDVKVTVYDGSYHEVDSSEMAFKLAASMGFKEGARKAGAVILEPMMKVEVETPEDYMGDVIGDLNKRRGQVNSMDERGGNKIITAFCPLAEMFGYSTDLRSQTQGRATYSMEFDHYDEVPKNVADEIIKKRNG.

The region spanning Lys-8 to Asp-283 is the tr-type G domain. Residues Ala-17–Thr-24, Asp-81–His-85, and Asn-135–Asp-138 each bind GTP.

The protein belongs to the TRAFAC class translation factor GTPase superfamily. Classic translation factor GTPase family. EF-G/EF-2 subfamily.

The protein localises to the cytoplasm. Its function is as follows. Catalyzes the GTP-dependent ribosomal translocation step during translation elongation. During this step, the ribosome changes from the pre-translocational (PRE) to the post-translocational (POST) state as the newly formed A-site-bound peptidyl-tRNA and P-site-bound deacylated tRNA move to the P and E sites, respectively. Catalyzes the coordinated movement of the two tRNA molecules, the mRNA and conformational changes in the ribosome. The polypeptide is Elongation factor G (Campylobacter jejuni subsp. jejuni serotype O:23/36 (strain 81-176)).